We begin with the raw amino-acid sequence, 148 residues long: HTH-type transcriptional regulator Ptr1 (148 aa).

An HTH asnC-type domain is found at 2 to 63 (LDRIDLKILR…SINPKNLGFE (62 aa)). The segment at residues 21 to 40 (FREIGRELGISEGTVRNRVK) is a DNA-binding region (H-T-H motif).

As to quaternary structure, homodimer.

Its function is as follows. Participates in positive as well as negative regulation of transcription. Binds to its own promoter. The protein is HTH-type transcriptional regulator Ptr1 (ptr1) of Methanocaldococcus jannaschii (strain ATCC 43067 / DSM 2661 / JAL-1 / JCM 10045 / NBRC 100440) (Methanococcus jannaschii).